Reading from the N-terminus, the 91-residue chain is Progonadoliberin-1 (91 aa).

Positions 1-23 are cleaved as a signal peptide; sequence MEPIPKLLAGLLLLTLCVVGCSS. Residue Q24 is modified to Pyrrolidone carboxylic acid. Glycine amide is present on G33.

This sequence belongs to the GnRH family. The precursor is cleaved by ACE, which removes the Gly-Lys-Arg peptide at the C-terminus, leading to mature hormone. The mature form of Gonadoliberin-1 is also cleaved and degraded by ACE.

It is found in the secreted. Stimulates the secretion of gonadotropins; it stimulates the secretion of both luteinizing and follicle-stimulating hormones. This is Progonadoliberin-1 (GNRH1) from Sus scrofa (Pig).